The sequence spans 197 residues: Translation initiation factor IF-3 (197 aa).

Belongs to the IF-3 family. As to quaternary structure, monomer.

It is found in the cytoplasm. Its function is as follows. IF-3 binds to the 30S ribosomal subunit and shifts the equilibrium between 70S ribosomes and their 50S and 30S subunits in favor of the free subunits, thus enhancing the availability of 30S subunits on which protein synthesis initiation begins. The chain is Translation initiation factor IF-3 from Prosthecochloris aestuarii (strain DSM 271 / SK 413).